The primary structure comprises 542 residues: GMP synthase [glutamine-hydrolyzing] (542 aa).

The region spanning 28–218 (MIVILDFGSQ…VYHICECEPT (191 aa)) is the Glutamine amidotransferase type-1 domain. Cys-105 serves as the catalytic Nucleophile. Residues His-192 and Glu-194 contribute to the active site. Positions 219–417 (WTTEAFVDET…IGLPEEIVRR (199 aa)) constitute a GMPS ATP-PPase domain. ATP is bound at residue 246 to 252 (SGGVDSS).

As to quaternary structure, homodimer.

It catalyses the reaction XMP + L-glutamine + ATP + H2O = GMP + L-glutamate + AMP + diphosphate + 2 H(+). It participates in purine metabolism; GMP biosynthesis; GMP from XMP (L-Gln route): step 1/1. Functionally, catalyzes the synthesis of GMP from XMP. The sequence is that of GMP synthase [glutamine-hydrolyzing] from Crocosphaera subtropica (strain ATCC 51142 / BH68) (Cyanothece sp. (strain ATCC 51142)).